We begin with the raw amino-acid sequence, 554 residues long: Hydroxylamine reductase (554 aa).

4 residues coordinate [2Fe-2S] cluster: Cys3, Cys6, Cys18, and Cys25. Residues His252, Glu276, Cys320, Cys408, Cys436, Cys461, Glu495, and Lys497 each coordinate hybrid [4Fe-2O-2S] cluster. Cys408 is subject to Cysteine persulfide.

The protein belongs to the HCP family. It depends on [2Fe-2S] cluster as a cofactor. Hybrid [4Fe-2O-2S] cluster serves as cofactor.

It localises to the cytoplasm. It carries out the reaction A + NH4(+) + H2O = hydroxylamine + AH2 + H(+). Its function is as follows. Catalyzes the reduction of hydroxylamine to form NH(3) and H(2)O. This is Hydroxylamine reductase from Shewanella pealeana (strain ATCC 700345 / ANG-SQ1).